A 466-amino-acid polypeptide reads, in one-letter code: Tetratricopeptide repeat protein 38 (466 aa).

TPR repeat units lie at residues M175–D212, C251–K284, and L368–I400.

Belongs to the TTC38 family.

This is Tetratricopeptide repeat protein 38 (ttc38) from Danio rerio (Zebrafish).